The primary structure comprises 394 residues: Actin-related protein 2-A (394 aa).

ATP-binding positions include 160–162 (GDG), 214–218 (RMMKE), and 305–310 (GGSTMY).

It belongs to the actin family. ARP2 subfamily. Component of the Arp2/3 complex composed of actr2/arp2, actr3/arp3, arpc1b, arpc2, arpc3, arpc4 and arpc5.

It localises to the cytoplasm. It is found in the cytoskeleton. The protein resides in the cell projection. Its subcellular location is the nucleus. In terms of biological role, ATP-binding component of the Arp2/3 complex, a multiprotein complex that mediates actin polymerization upon stimulation by nucleation-promoting factor (NPF). The Arp2/3 complex mediates the formation of branched actin networks in the cytoplasm, providing the force for cell motility. Seems to contact the pointed end of the daughter actin filament. In addition to its role in the cytoplasmic cytoskeleton, the Arp2/3 complex also promotes actin polymerization in the nucleus, thereby regulating gene transcription and repair of damaged DNA. The Arp2/3 complex promotes homologous recombination (HR) repair in response to DNA damage by promoting nuclear actin polymerization, leading to drive motility of double-strand breaks (DSBs). This Danio rerio (Zebrafish) protein is Actin-related protein 2-A (actr2a).